The following is a 417-amino-acid chain: NADH-quinone oxidoreductase subunit D (417 aa).

Belongs to the complex I 49 kDa subunit family. NDH-1 is composed of 14 different subunits. Subunits NuoB, C, D, E, F, and G constitute the peripheral sector of the complex.

The protein resides in the cell inner membrane. It carries out the reaction a quinone + NADH + 5 H(+)(in) = a quinol + NAD(+) + 4 H(+)(out). Functionally, NDH-1 shuttles electrons from NADH, via FMN and iron-sulfur (Fe-S) centers, to quinones in the respiratory chain. The immediate electron acceptor for the enzyme in this species is believed to be ubiquinone. Couples the redox reaction to proton translocation (for every two electrons transferred, four hydrogen ions are translocated across the cytoplasmic membrane), and thus conserves the redox energy in a proton gradient. The sequence is that of NADH-quinone oxidoreductase subunit D from Burkholderia ambifaria (strain ATCC BAA-244 / DSM 16087 / CCUG 44356 / LMG 19182 / AMMD) (Burkholderia cepacia (strain AMMD)).